A 1426-amino-acid chain; its full sequence is Homeobox protein cut-like 2 (1426 aa).

Residues 77 to 104 form a disordered region; sequence PEPPSAREQNEGTCPTGHTPANGNHLPG. At S81 the chain carries Phosphoserine. Residues 131 to 311 are a coiled coil; it reads ITLAARLGEA…IKTELSILRA (181 aa). Disordered stretches follow at residues 351–419, 460–488, 599–628, 653–676, 743–769, and 904–977; these read ALLA…FPSL, KPPS…GPEE, EIES…STSE, ESGP…TASQ, YASV…PRGD, and LGQG…SSSQ. Positions 374-395 are enriched in pro residues; it reads PPYPPQLPPPPGPEDPLSPSPA. 2 stretches are compositionally biased toward low complexity: residues 397-408 and 460-470; these read PLLGPSLGPDGP and KPPSAPAASVP. Residues 482 to 569 constitute a DNA-binding region (CUT 1); the sequence is DGAGPEEEQL…VLALRTIQVR (88 aa). Residues 587 to 655 adopt a coiled-coil conformation; sequence DAIKSILEQA…QQALLEMESG (69 aa). The segment covering 608–628 has biased composition (polar residues); that stretch reads SKNSPASVSIPNGTASSSTSE. Low complexity-rich tracts occupy residues 743-757, 910-928, and 965-976; these read YASV…SSYS, QAPT…EPTS, and SSSLGGKPFSSS. Residues 828–915 constitute a DNA-binding region (CUT 2); that stretch reads QYELYMYREV…QGQGQAPTQQ (88 aa). Positions 983–1070 form a DNA-binding region, CUT 3; it reads QEMVAMSPEL…VEKLRDMKKL (88 aa). Residues 1113–1172 constitute a DNA-binding region (homeobox); it reads AKKPRVVLAPAEKEALRKAYQLEPYPSQQTIELLSFQLNLKTNTVINWFHNYRSRMRREM. A disordered region spans residues 1177-1392; that stretch reads TQDDPDFDPS…AALHPSTKVN (216 aa). 2 stretches are compositionally biased toward basic and acidic residues: residues 1233–1245 and 1260–1274; these read APDR…KQEE and DPDR…EHTH. Residues 1318 to 1332 are compositionally biased toward low complexity; sequence LSFKSTSESSCCSLE. Residues 1338-1350 are compositionally biased toward polar residues; the sequence is PSVISSPDLTTCV. The span at 1351 to 1364 shows a compositional bias: low complexity; that stretch reads SPAPSSSAPISPSL.

The protein belongs to the CUT homeobox family. As to expression, restricted to neural tissues. Expressed exclusively in the central and peripheral nervous systems.

The protein localises to the nucleus. In terms of biological role, transcription factor involved in the control of neuronal proliferation and differentiation in the brain. Regulates dendrite development and branching, dendritic spine formation, and synaptogenesis in cortical layers II-III. Binds to DNA in a sequence-specific manner. The chain is Homeobox protein cut-like 2 (Cux2) from Mus musculus (Mouse).